A 351-amino-acid polypeptide reads, in one-letter code: MTIAIGQEKTRGGFDLVDDWLKRDRFVFVGWSGLLLFPCAYLAVGGWLTGTTFVTSWYTHGLASSYLEGCNFLTAAVSTPANSMGHSLLFLWGPEAQGDFTRWCQIGGLWAFIALHGSFGLIGFCLRQFEIARLVGLRPYNAIAFSGPIAVFVSVFLMYPLGQASWFFAPSLGVAAIFRFLLFLQGFHNWTLNPFHMMGVAGILGGALLCAIHGATVQNTLFEDGDAADTFRAFTPTQSEETYSMVTANRFWSQIFGVAFSNKRWLHFFMLFVPVTGLWTSAFGIVGLALNLRAYDFVSQELRAAEDPEFETFYTKIILXDEGIRSWMAAQDQPHENFIFPEEVLPRGNAL.

A helical membrane pass occupies residues 39-59; the sequence is CAYLAVGGWLTGTTFVTSWYT. His116 serves as a coordination point for chlorophyll a. Residues 123-139 traverse the membrane as a helical segment; that stretch reads GFCLRQFEIARLVGLRP. 2 residues coordinate pheophytin a: Gln128 and Asn141. A helical transmembrane segment spans residues 151–164; it reads VFVSVFLMYPLGQA. Position 196 (His196) interacts with chlorophyll a. Residues 206 to 226 traverse the membrane as a helical segment; it reads GALLCAIHGATVQNTLFEDGD. Residues His213 and Phe260 each contribute to the a plastoquinone site. Residue His213 participates in Fe cation binding. His267 is a Fe cation binding site. Residues 277 to 293 form a helical membrane-spanning segment; that stretch reads GLWTSAFGIVGLALNLR.

Belongs to the reaction center PufL/M/PsbA/D family. In terms of assembly, PSII is composed of 1 copy each of membrane proteins PsbA, PsbB, PsbC, PsbD, PsbE, PsbF, PsbH, PsbI, PsbJ, PsbK, PsbL, PsbM, PsbT, PsbX, PsbY, PsbZ, Psb30/Ycf12, at least 3 peripheral proteins of the oxygen-evolving complex and a large number of cofactors. It forms dimeric complexes. The D1/D2 heterodimer binds P680, chlorophylls that are the primary electron donor of PSII, and subsequent electron acceptors. It shares a non-heme iron and each subunit binds pheophytin, quinone, additional chlorophylls, carotenoids and lipids. There is also a Cl(-1) ion associated with D1 and D2, which is required for oxygen evolution. The PSII complex binds additional chlorophylls, carotenoids and specific lipids. serves as cofactor.

It is found in the plastid. Its subcellular location is the chloroplast thylakoid membrane. It carries out the reaction 2 a plastoquinone + 4 hnu + 2 H2O = 2 a plastoquinol + O2. In terms of biological role, photosystem II (PSII) is a light-driven water:plastoquinone oxidoreductase that uses light energy to abstract electrons from H(2)O, generating O(2) and a proton gradient subsequently used for ATP formation. It consists of a core antenna complex that captures photons, and an electron transfer chain that converts photonic excitation into a charge separation. The D1/D2 (PsbA/PsbD) reaction center heterodimer binds P680, the primary electron donor of PSII as well as several subsequent electron acceptors. D2 is needed for assembly of a stable PSII complex. This chain is Photosystem II D2 protein, found in Pyropia yezoensis (Susabi-nori).